We begin with the raw amino-acid sequence, 174 residues long: Urease accessory protein UreE (174 aa).

The disordered stretch occupies residues 146–174 (NGAYATGGHAHDHDGEPEHVHGPGCQHAH). A compositionally biased stretch (basic and acidic residues) spans 154 to 166 (HAHDHDGEPEHVH).

It belongs to the UreE family.

The protein localises to the cytoplasm. Its function is as follows. Involved in urease metallocenter assembly. Binds nickel. Probably functions as a nickel donor during metallocenter assembly. The sequence is that of Urease accessory protein UreE from Albidiferax ferrireducens (strain ATCC BAA-621 / DSM 15236 / T118) (Rhodoferax ferrireducens).